Here is a 350-residue protein sequence, read N- to C-terminus: MSQSAVSFQINPVSKVQEQSIQQKINLKTKPLGALGQLESLALQIARIQGADQPYIANPTMLVFAGDHGIAAEGVSIAPSEVTRQMVQNFAHGGAAINVFCRQVGFKLEVIDCGILTPIEGVKGIIDQRLGAGTGAIHLEPAMALETVDKGFAMARDLIERHHQTGCNLVAFGEMGIGNTSAASAIMAAIMQLDVIDCVGRGTGINQETLARKLMLIELALLLHQSALTGPKEVLACLGGFEIVQMTGAMLAAAERNMLVVVDGFIATAAALVAVTIAPNVRDYLIFAHQSEEQGHLRMLEFLQAKPLLSLGLRLGEGTGAALALPLIQAAVNFYNQMASFSDAGIEAVV.

Glutamate 317 (proton acceptor) is an active-site residue.

This sequence belongs to the CobT family.

It catalyses the reaction 5,6-dimethylbenzimidazole + nicotinate beta-D-ribonucleotide = alpha-ribazole 5'-phosphate + nicotinate + H(+). The protein operates within nucleoside biosynthesis; alpha-ribazole biosynthesis; alpha-ribazole from 5,6-dimethylbenzimidazole: step 1/2. Functionally, catalyzes the synthesis of alpha-ribazole-5'-phosphate from nicotinate mononucleotide (NAMN) and 5,6-dimethylbenzimidazole (DMB). This is Nicotinate-nucleotide--dimethylbenzimidazole phosphoribosyltransferase from Shewanella sp. (strain W3-18-1).